Consider the following 455-residue polypeptide: Chromosomal replication initiator protein DnaA 2 (455 aa).

Residues 1–95 (MLTCNDCSTW…KRSSPLVTPS (95 aa)) form a domain I, interacts with DnaA modulators region. The interval 96–112 (IAKPATEVSEENKDFQL) is domain II. Residues 113 to 328 (KLNGAYRFDN…GAINKLTAYC (216 aa)) form a domain III, AAA+ region region. Residues G157, G159, K160, and T161 each coordinate ATP. The domain IV, binds dsDNA stretch occupies residues 329-455 (LLFNKPLTET…IAIDSPQHFV (127 aa)).

This sequence belongs to the DnaA family. In terms of assembly, oligomerizes as a right-handed, spiral filament on DNA at oriC.

Its subcellular location is the cytoplasm. Functionally, plays an essential role in the initiation and regulation of chromosomal replication. ATP-DnaA binds to the origin of replication (oriC) to initiate formation of the DNA replication initiation complex once per cell cycle. Binds the DnaA box (a 9 base pair repeat at the origin) and separates the double-stranded (ds)DNA. Forms a right-handed helical filament on oriC DNA; dsDNA binds to the exterior of the filament while single-stranded (ss)DNA is stabiized in the filament's interior. The ATP-DnaA-oriC complex binds and stabilizes one strand of the AT-rich DNA unwinding element (DUE), permitting loading of DNA polymerase. After initiation quickly degrades to an ADP-DnaA complex that is not apt for DNA replication. Binds acidic phospholipids. The chain is Chromosomal replication initiator protein DnaA 2 from Chlamydia trachomatis serovar D (strain ATCC VR-885 / DSM 19411 / UW-3/Cx).